A 365-amino-acid chain; its full sequence is Peptide chain release factor 2 (365 aa).

At glutamine 252 the chain carries N5-methylglutamine.

This sequence belongs to the prokaryotic/mitochondrial release factor family. In terms of processing, methylated by PrmC. Methylation increases the termination efficiency of RF2.

The protein localises to the cytoplasm. In terms of biological role, peptide chain release factor 2 directs the termination of translation in response to the peptide chain termination codons UGA and UAA. This chain is Peptide chain release factor 2 (prfB), found in Salmonella typhimurium (strain LT2 / SGSC1412 / ATCC 700720).